The following is a 271-amino-acid chain: Probable short-chain type dehydrogenase/reductase VdlC (271 aa).

NAD(+) is bound at residue 1–25 (MAVITGASSGIGLECVLMLLNQGYK). S129 serves as a coordination point for substrate. Catalysis depends on Y142, which acts as the Proton acceptor.

It belongs to the short-chain dehydrogenases/reductases (SDR) family.

This is Probable short-chain type dehydrogenase/reductase VdlC (vdlC) from Helicobacter pylori (strain J99 / ATCC 700824) (Campylobacter pylori J99).